A 564-amino-acid chain; its full sequence is Phenylalanine--tRNA ligase beta subunit (564 aa).

The B5 domain maps to 286-362 (YFQNSLKINV…IGKGLDNFKS (77 aa)). Mg(2+)-binding residues include aspartate 340, aspartate 346, glutamate 349, and glutamate 350.

This sequence belongs to the phenylalanyl-tRNA synthetase beta subunit family. Type 2 subfamily. Tetramer of two alpha and two beta subunits. It depends on Mg(2+) as a cofactor.

It is found in the cytoplasm. It catalyses the reaction tRNA(Phe) + L-phenylalanine + ATP = L-phenylalanyl-tRNA(Phe) + AMP + diphosphate + H(+). The chain is Phenylalanine--tRNA ligase beta subunit from Borrelia recurrentis (strain A1).